We begin with the raw amino-acid sequence, 337 residues long: tRNA(Ile)-lysidine synthase (337 aa).

40 to 45 (SGGQDS) contributes to the ATP binding site.

This sequence belongs to the tRNA(Ile)-lysidine synthase family.

The protein localises to the cytoplasm. The enzyme catalyses cytidine(34) in tRNA(Ile2) + L-lysine + ATP = lysidine(34) in tRNA(Ile2) + AMP + diphosphate + H(+). Functionally, ligates lysine onto the cytidine present at position 34 of the AUA codon-specific tRNA(Ile) that contains the anticodon CAU, in an ATP-dependent manner. Cytidine is converted to lysidine, thus changing the amino acid specificity of the tRNA from methionine to isoleucine. This chain is tRNA(Ile)-lysidine synthase, found in Parasynechococcus marenigrum (strain WH8102).